A 132-amino-acid chain; its full sequence is Evasin P985 (132 aa).

Residues M1–T24 form the signal peptide. N-linked (GlcNAc...) asparagine glycans are attached at residues N45, N69, N74, N103, N111, and N117. Intrachain disulfides connect C48/C70, C66/C109, C83/C114, and C104/C123.

Its subcellular location is the secreted. In terms of biological role, salivary chemokine-binding protein which binds to host chemokine CCL5. The sequence is that of Evasin P985 from Amblyomma parvum (South American tick).